Reading from the N-terminus, the 770-residue chain is ATP-dependent RNA helicase HCA4 (770 aa).

A Q motif motif is present at residues 41 to 69; it reads KFFKDLPISDPTLKGLRESSFIKLTEIQA. Residues 72–246 enclose the Helicase ATP-binding domain; the sequence is IPVSLQGHDV…RLSLTDYKTV (175 aa). ATP is bound at residue 85-92; the sequence is AKTGSGKT. The short motif at 194 to 197 is the DEAD box element; that stretch reads DEAD. One can recognise a Helicase C-terminal domain in the interval 278 to 437; sequence KLDILFSFIK…SIKPQLQSLL (160 aa). Serine 692, serine 710, serine 714, and serine 743 each carry phosphoserine. The tract at residues 705 to 724 is disordered; it reads GTGNLSDDMSDGDMPDSEGH.

This sequence belongs to the DEAD box helicase family. DDX10/DBP4 subfamily. In terms of assembly, interacts with the U3 and U14 snoRNAs. Associates with pre-ribosomal complexes.

The protein localises to the nucleus. Its subcellular location is the nucleolus. The catalysed reaction is ATP + H2O = ADP + phosphate + H(+). In terms of biological role, ATP-dependent RNA helicase required for ribosome biogenesis. Involved in the release of U14 snoRNA in pre-ribosomal complexes. Required for pre-rRNA cleavage at site A2. In Saccharomyces cerevisiae (strain ATCC 204508 / S288c) (Baker's yeast), this protein is ATP-dependent RNA helicase HCA4 (HCA4).